Reading from the N-terminus, the 214-residue chain is Large ribosomal subunit protein uL18 (214 aa).

Belongs to the universal ribosomal protein uL18 family. Part of the 50S ribosomal subunit. Contacts the 5S and 23S rRNAs.

Functionally, this is one of the proteins that bind and probably mediate the attachment of the 5S RNA into the large ribosomal subunit, where it forms part of the central protuberance. The sequence is that of Large ribosomal subunit protein uL18 from Aeropyrum pernix (strain ATCC 700893 / DSM 11879 / JCM 9820 / NBRC 100138 / K1).